The primary structure comprises 213 residues: Kynurenine formamidase (213 aa).

Tryptophan 18 contacts substrate. Zn(2+)-binding residues include histidine 48, histidine 52, and aspartate 54. Residue histidine 58 is the Proton donor/acceptor of the active site. Zn(2+)-binding residues include histidine 160 and glutamate 172.

Belongs to the Cyclase 1 superfamily. KynB family. As to quaternary structure, homodimer. Zn(2+) serves as cofactor.

The enzyme catalyses N-formyl-L-kynurenine + H2O = L-kynurenine + formate + H(+). The protein operates within amino-acid degradation; L-tryptophan degradation via kynurenine pathway; L-kynurenine from L-tryptophan: step 2/2. Functionally, catalyzes the hydrolysis of N-formyl-L-kynurenine to L-kynurenine, the second step in the kynurenine pathway of tryptophan degradation. The sequence is that of Kynurenine formamidase from Burkholderia pseudomallei (strain 1710b).